We begin with the raw amino-acid sequence, 460 residues long: Glycine--tRNA ligase (460 aa).

2 residues coordinate substrate: Arg98 and Glu172. Residues 204 to 206 (RNE), 214 to 219 (FRTREF), 288 to 289 (EL), and 332 to 335 (GADR) each bind ATP. Residue 219–223 (FEQME) coordinates substrate. 328–332 (EPSLG) is a substrate binding site.

The protein belongs to the class-II aminoacyl-tRNA synthetase family. Homodimer.

It localises to the cytoplasm. It carries out the reaction tRNA(Gly) + glycine + ATP = glycyl-tRNA(Gly) + AMP + diphosphate. Functionally, catalyzes the attachment of glycine to tRNA(Gly). This is Glycine--tRNA ligase from Geobacillus kaustophilus (strain HTA426).